We begin with the raw amino-acid sequence, 829 residues long: Ent-cassa-12,15-diene synthase (829 aa).

A disordered region spans residues Met1–Asp50. Polar residues predominate over residues Gly23–Ser37. The Mg(2+) site is built by Asp576, Asp580, Asn720, and Glu728. Positions Asp576–Asp580 match the DDXXD motif motif.

The protein belongs to the terpene synthase family. Mg(2+) is required as a cofactor. As to expression, expressed in roots and stems.

The catalysed reaction is ent-copalyl diphosphate = ent-cassa-12,15-diene + diphosphate. Functionally, involved in phytocassane phytoalexins biosynthesis. Catalyzes the conversion of ent-copalyl diphosphate to the phytoalexin precursor ent-cassa-12,15-diene. In Oryza sativa subsp. japonica (Rice), this protein is Ent-cassa-12,15-diene synthase (KSL7).